The primary structure comprises 263 residues: E3 ubiquitin-protein ligase SINA-like 8 (263 aa).

The segment at 35 to 71 (CPICCEGLTCPIFQCENGHLACSSCCPKLRNKCPACP) adopts an RING-type; degenerate zinc-finger fold. An SBD region spans residues 75-261 (ILESILVTCP…IKLSIVETSN (187 aa)). The SIAH-type zinc-finger motif lies at 78-136 (SILVTCPNDMFGCTESFLYGKKSTHEEECIFSLCSCPSLDCEYSGRYEDLYDHYKLTHI). Positions 83, 90, 102, 106, 113, 118, 130, and 135 each coordinate Zn(2+).

This sequence belongs to the SINA (Seven in absentia) family.

It catalyses the reaction S-ubiquitinyl-[E2 ubiquitin-conjugating enzyme]-L-cysteine + [acceptor protein]-L-lysine = [E2 ubiquitin-conjugating enzyme]-L-cysteine + N(6)-ubiquitinyl-[acceptor protein]-L-lysine.. It functions in the pathway protein modification; protein ubiquitination. E3 ubiquitin-protein ligase that mediates ubiquitination and subsequent proteasomal degradation of target proteins. E3 ubiquitin ligases accept ubiquitin from an E2 ubiquitin-conjugating enzyme in the form of a thioester and then directly transfers the ubiquitin to targeted substrates. It probably triggers the ubiquitin-mediated degradation of different substrates. In Arabidopsis thaliana (Mouse-ear cress), this protein is E3 ubiquitin-protein ligase SINA-like 8.